The primary structure comprises 1087 residues: Apoptosis-stimulating of p53 protein 1 (1087 aa).

Residues 82–122 form a disordered region; sequence HEDSPTESSEQGARQTQEQRTQRSVVNVPGEKRTENGVGNP. Positions 87–106 are enriched in polar residues; sequence TESSEQGARQTQEQRTQRSV. Ser-332 and Ser-335 each carry phosphoserine. 3 disordered regions span residues 374-415, 442-721, and 734-878; these read SSAA…GMEG, IGKG…PNIQ, and GMEG…TGHG. A compositionally biased stretch (polar residues) spans 393 to 405; it reads KQNSASVKSTQMT. Positions 445-458 are enriched in pro residues; the sequence is GPPPIPGVGKPLPP. Over residues 459-476 the composition is skewed to low complexity; that stretch reads SYGTYPSSGPLGPGSTSS. The segment covering 506-520 has biased composition (polar residues); that stretch reads NAPQPGSSQQIQQRI. Pro residues predominate over residues 523 to 536; sequence PPSPTYPPAGPPAF. The residue at position 552 (Arg-552) is an Asymmetric dimethylarginine. Residues 570–589 are compositionally biased toward polar residues; the sequence is QTVNSSSIYSMYLQQATPPK. A compositionally biased stretch (low complexity) spans 610-625; it reads PVLPSGSASPSPLPFL. Phosphoserine occurs at positions 679 and 708. A compositionally biased stretch (polar residues) spans 805-831; that stretch reads PQTTHQTAEPTEDNNNNVAPVPSTEQI. ANK repeat units lie at residues 917-949 and 950-982; these read EGIT…AADS and DGWT…ASTI. The SH3 domain maps to 1016–1078; it reads MNKGTVYALW…PKNLLGLYPR (63 aa).

This sequence belongs to the ASPP family. In terms of assembly, interacts with P53/TP53; the interaction promotes pro-apoptotic activity.

It is found in the cytoplasm. Its subcellular location is the nucleus. Its function is as follows. Regulator that plays a central role in regulation of apoptosis via its interaction with p53/TP53. Regulates TP53 by enhancing the DNA binding and transactivation function of TP53 on the promoters of proapoptotic genes in vivo. The chain is Apoptosis-stimulating of p53 protein 1 (Ppp1r13b) from Mus musculus (Mouse).